Reading from the N-terminus, the 244-residue chain is tRNA pseudouridine synthase A (244 aa).

Asp52 (nucleophile) is an active-site residue. Tyr111 contributes to the substrate binding site.

The protein belongs to the tRNA pseudouridine synthase TruA family. As to quaternary structure, homodimer.

The enzyme catalyses uridine(38/39/40) in tRNA = pseudouridine(38/39/40) in tRNA. Functionally, formation of pseudouridine at positions 38, 39 and 40 in the anticodon stem and loop of transfer RNAs. In Thermosipho africanus (strain TCF52B), this protein is tRNA pseudouridine synthase A.